A 253-amino-acid chain; its full sequence is Aspartic acid-rich protein (253 aa).

A signal peptide spans 1–22 (MYLFIYIFFFFFFFFFFVIVQK). Positions 211–253 (DDFDEEFDDDDDDDDDDDDDDDDDDKDDDLDGDDDGNNDDNDD) are disordered.

It belongs to the nucleosome assembly protein (NAP) family.

In Plasmodium falciparum (isolate fcm17 / Senegal), this protein is Aspartic acid-rich protein.